The sequence spans 405 residues: BRCA1-A complex subunit Abraxas 1 (405 aa).

The MPN domain occupies 7-154 (LGVLSGFVLG…CTHCLEHGLY (148 aa)). A Phosphoserine modification is found at Ser48. Residues 208–262 (SLKEVRKINEMYAAIQEELKTICQKVEQSEREVEKLLMDVNRLKEVRKKQQAQAK) adopt a coiled-coil conformation. The tract at residues 333-405 (ASPAPAAPLS…DTDYPRSPTF (73 aa)) is disordered. Phosphoserine occurs at positions 382, 383, 392, and 402. Residues 386–397 (IDTEVGSPEDDT) show a composition bias toward acidic residues. A pSXXF motif motif is present at residues 402–405 (SPTF).

It belongs to the FAM175 family. Abraxas subfamily. In terms of assembly, component of the ARISC complex, at least composed of UIMC1/RAP80, ABRAXAS1, BRCC3/BRCC36, BABAM2 and BABAM1/NBA1. Component of the BRCA1-A complex, at least composed of the BRCA1, BARD1, UIMC1/RAP80, ABRAXAS1, BRCC3/BRCC36, BABAM2 and BABAM1/NBA1. In the complex, interacts directly with UIMC1/RAP80, BRCC3/BRCC36 and BABAM2. Homodimer. Interacts directly (when phosphorylated at Ser-402) with BRCA1. The phosphorylated homodimer can interact directly with two BRCA1 chains, giving rise to a heterotetramer. Binds polyubiquitin. In terms of processing, phosphorylation of Ser-402 of the pSXXF motif by ATM or ATR constitutes a specific recognition motif for the BRCT domain of BRCA1.

Its subcellular location is the nucleus. In terms of biological role, involved in DNA damage response and double-strand break (DSB) repair. Component of the BRCA1-A complex, acting as a central scaffold protein that assembles the various components of the complex and mediates the recruitment of BRCA1. The BRCA1-A complex specifically recognizes 'Lys-63'-linked ubiquitinated histones H2A and H2AX at DNA lesion sites, leading to target the BRCA1-BARD1 heterodimer to sites of DNA damage at DSBs. This complex also possesses deubiquitinase activity that specifically removes 'Lys-63'-linked ubiquitin on histones H2A and H2AX. In Rattus norvegicus (Rat), this protein is BRCA1-A complex subunit Abraxas 1.